Reading from the N-terminus, the 158-residue chain is 6,7-dimethyl-8-ribityllumazine synthase (158 aa).

Residues phenylalanine 22, 57 to 59 (AVE), and 81 to 83 (AVI) each bind 5-amino-6-(D-ribitylamino)uracil. 86–87 (GT) lines the (2S)-2-hydroxy-3-oxobutyl phosphate pocket. Histidine 89 acts as the Proton donor in catalysis. Phenylalanine 114 is a 5-amino-6-(D-ribitylamino)uracil binding site. Arginine 128 lines the (2S)-2-hydroxy-3-oxobutyl phosphate pocket.

Belongs to the DMRL synthase family. In terms of assembly, forms an icosahedral capsid composed of 60 subunits, arranged as a dodecamer of pentamers.

It carries out the reaction (2S)-2-hydroxy-3-oxobutyl phosphate + 5-amino-6-(D-ribitylamino)uracil = 6,7-dimethyl-8-(1-D-ribityl)lumazine + phosphate + 2 H2O + H(+). The protein operates within cofactor biosynthesis; riboflavin biosynthesis; riboflavin from 2-hydroxy-3-oxobutyl phosphate and 5-amino-6-(D-ribitylamino)uracil: step 1/2. Catalyzes the formation of 6,7-dimethyl-8-ribityllumazine by condensation of 5-amino-6-(D-ribitylamino)uracil with 3,4-dihydroxy-2-butanone 4-phosphate. This is the penultimate step in the biosynthesis of riboflavin. In Shewanella piezotolerans (strain WP3 / JCM 13877), this protein is 6,7-dimethyl-8-ribityllumazine synthase.